The primary structure comprises 153 residues: Ribosome maturation factor RimP (153 aa).

It belongs to the RimP family.

It is found in the cytoplasm. In terms of biological role, required for maturation of 30S ribosomal subunits. The sequence is that of Ribosome maturation factor RimP from Clostridium botulinum (strain 657 / Type Ba4).